The chain runs to 234 residues: Sugar fermentation stimulation protein homolog (234 aa).

It belongs to the SfsA family.

In Shewanella piezotolerans (strain WP3 / JCM 13877), this protein is Sugar fermentation stimulation protein homolog.